The primary structure comprises 69 residues: Large ribosomal subunit protein uL29 (69 aa).

It belongs to the universal ribosomal protein uL29 family.

The polypeptide is Large ribosomal subunit protein uL29 (Carboxydothermus hydrogenoformans (strain ATCC BAA-161 / DSM 6008 / Z-2901)).